The following is a 426-amino-acid chain: 3-phosphoshikimate 1-carboxyvinyltransferase (426 aa).

The 3-phosphoshikimate site is built by Lys22, Ser23, and Arg27. Residue Lys22 participates in phosphoenolpyruvate binding. Phosphoenolpyruvate-binding residues include Gly96 and Arg124. Residues Ser170, Ser171, Gln172, Ser198, Asp314, Asn337, and Lys341 each contribute to the 3-phosphoshikimate site. Position 172 (Gln172) interacts with phosphoenolpyruvate. The active-site Proton acceptor is the Asp314. Arg345, Arg387, and Lys412 together coordinate phosphoenolpyruvate.

It belongs to the EPSP synthase family. Monomer.

It localises to the cytoplasm. It carries out the reaction 3-phosphoshikimate + phosphoenolpyruvate = 5-O-(1-carboxyvinyl)-3-phosphoshikimate + phosphate. It participates in metabolic intermediate biosynthesis; chorismate biosynthesis; chorismate from D-erythrose 4-phosphate and phosphoenolpyruvate: step 6/7. Its function is as follows. Catalyzes the transfer of the enolpyruvyl moiety of phosphoenolpyruvate (PEP) to the 5-hydroxyl of shikimate-3-phosphate (S3P) to produce enolpyruvyl shikimate-3-phosphate and inorganic phosphate. In Shewanella oneidensis (strain ATCC 700550 / JCM 31522 / CIP 106686 / LMG 19005 / NCIMB 14063 / MR-1), this protein is 3-phosphoshikimate 1-carboxyvinyltransferase.